Reading from the N-terminus, the 299-residue chain is Protein-methionine-sulfoxide reductase catalytic subunit MsrP (299 aa).

The segment at residues 1 to 44 (MAHRWINDLTPADITPRGAWMNRRQVMAGMAGAGLAAFAGSAQA) is a signal peptide (tat-type signal). Residues Asn-59, 62 to 63 (YE), Cys-117, Thr-152, Asn-200, Arg-205, and 216 to 218 (SIK) contribute to the Mo-molybdopterin site.

The protein belongs to the MsrP family. Heterodimer of a catalytic subunit (MsrP) and a heme-binding subunit (MsrQ). Requires Mo-molybdopterin as cofactor. Predicted to be exported by the Tat system. The position of the signal peptide cleavage has not been experimentally proven.

It localises to the periplasm. The catalysed reaction is L-methionyl-[protein] + a quinone + H2O = L-methionyl-(S)-S-oxide-[protein] + a quinol. It catalyses the reaction L-methionyl-[protein] + a quinone + H2O = L-methionyl-(R)-S-oxide-[protein] + a quinol. Part of the MsrPQ system that repairs oxidized periplasmic proteins containing methionine sulfoxide residues (Met-O), using respiratory chain electrons. Thus protects these proteins from oxidative-stress damage caused by reactive species of oxygen and chlorine generated by the host defense mechanisms. MsrPQ is essential for the maintenance of envelope integrity under bleach stress, rescuing a wide series of structurally unrelated periplasmic proteins from methionine oxidation. The catalytic subunit MsrP is non-stereospecific, being able to reduce both (R-) and (S-) diastereoisomers of methionine sulfoxide. This chain is Protein-methionine-sulfoxide reductase catalytic subunit MsrP, found in Ruegeria pomeroyi (strain ATCC 700808 / DSM 15171 / DSS-3) (Silicibacter pomeroyi).